The chain runs to 138 residues: Putative nickel-responsive regulator (138 aa).

Ni(2+)-binding residues include His78, His89, His91, and Cys97.

It belongs to the transcriptional regulatory CopG/NikR family. It depends on Ni(2+) as a cofactor.

In terms of biological role, transcriptional regulator. This is Putative nickel-responsive regulator from Pyrococcus horikoshii (strain ATCC 700860 / DSM 12428 / JCM 9974 / NBRC 100139 / OT-3).